The chain runs to 274 residues: Large ribosomal subunit protein uL2cz/uL2cy (274 aa).

2 disordered regions span residues 1–22 (MAIH…DSQV) and 225–274 (PVDH…RRSK).

This sequence belongs to the universal ribosomal protein uL2 family. As to quaternary structure, part of the 50S ribosomal subunit.

Its subcellular location is the plastid. It is found in the chloroplast. The chain is Large ribosomal subunit protein uL2cz/uL2cy (rpl2-A) from Nasturtium officinale (Watercress).